We begin with the raw amino-acid sequence, 451 residues long: uncharacterized protein (451 aa).

The tract at residues 1 to 451 is disordered; sequence MSETENKTTT…KKEAAKNKSK (451 aa). A compositionally biased stretch (low complexity) spans 9-22; that stretch reads TTETPTTTDSTVTT. Polar residues predominate over residues 44–54; sequence VKNQLSNTRTR. The span at 73-99 shows a compositional bias: basic and acidic residues; it reads KLIDTKERKEKKEKKEKEPKEPKEPKE. Acidic residues predominate over residues 114–147; it reads GDEEEDEEKEEDEEQKEEQSQEEDSEESEEEQNS. Basic residues predominate over residues 152-162; the sequence is KKKKKQAKKVA. Composition is skewed to basic and acidic residues over residues 163 to 192, 199 to 210, and 217 to 230; these read KKET…EKEA, STEKKEKEEKPK, and KKDQ…KDGD. A compositionally biased stretch (low complexity) spans 232 to 244; sequence STTTTATATTTTD. Composition is skewed to basic and acidic residues over residues 284–303 and 311–340; these read TEEK…ETKK and AAAE…DDKP. The segment covering 341-355 has biased composition (low complexity); it reads AATTTTTTAAAATTT. Basic and acidic residues predominate over residues 356–383; that stretch reads EEPKEKITKPAADKKKAPANKKAEKDQS. A compositionally biased stretch (low complexity) spans 393–425; it reads TTTATTTTTNKDATAPTTTTNKDATAPTTTTTK. The segment covering 441–451 has biased composition (basic and acidic residues); sequence PKKEAAKNKSK.

This is an uncharacterized protein from Dictyostelium discoideum (Social amoeba).